The chain runs to 399 residues: Elongation factor Tu (399 aa).

Residues 10 to 209 (KPHVNIGTIG…DVDEYIPTPV (200 aa)) enclose the tr-type G domain. The tract at residues 19 to 26 (GHVDHGKT) is G1. Residue 19–26 (GHVDHGKT) coordinates GTP. A Mg(2+)-binding site is contributed by Thr26. A G2 region spans residues 62–66 (GITIN). The tract at residues 83-86 (DCPG) is G3. Residues 83–87 (DCPGH) and 138–141 (NKCD) each bind GTP. The segment at 138 to 141 (NKCD) is G4. The interval 175–177 (SAY) is G5.

This sequence belongs to the TRAFAC class translation factor GTPase superfamily. Classic translation factor GTPase family. EF-Tu/EF-1A subfamily. Monomer.

The protein localises to the cytoplasm. It catalyses the reaction GTP + H2O = GDP + phosphate + H(+). GTP hydrolase that promotes the GTP-dependent binding of aminoacyl-tRNA to the A-site of ribosomes during protein biosynthesis. The protein is Elongation factor Tu of Bifidobacterium animalis subsp. lactis (strain AD011).